Consider the following 372-residue polypeptide: tRNA-specific 2-thiouridylase MnmA (372 aa).

Residues Gly16–Ser23 and Met42 contribute to the ATP site. Residues Asn102–Asp104 are interaction with target base in tRNA. The Nucleophile role is filled by Cys107. An intrachain disulfide couples Cys107 to Cys205. Gly132 is an ATP binding site. The interval Lys155–Gln157 is interaction with tRNA. The Cysteine persulfide intermediate role is filled by Cys205. The tract at residues Arg317–Tyr318 is interaction with tRNA.

It belongs to the MnmA/TRMU family.

It is found in the cytoplasm. The catalysed reaction is S-sulfanyl-L-cysteinyl-[protein] + uridine(34) in tRNA + AH2 + ATP = 2-thiouridine(34) in tRNA + L-cysteinyl-[protein] + A + AMP + diphosphate + H(+). Functionally, catalyzes the 2-thiolation of uridine at the wobble position (U34) of tRNA, leading to the formation of s(2)U34. This chain is tRNA-specific 2-thiouridylase MnmA, found in Shewanella frigidimarina (strain NCIMB 400).